A 32-amino-acid polypeptide reads, in one-letter code: CEDGGVPSASCRANTEDYRYCNACYLQEVIGK.

Position 30 is an isoleucine amide (I30).

Post-translationally, contains 2 disulfide bonds. As to expression, expressed by the venom duct.

It is found in the secreted. The sequence is that of Turripeptide XIV-18 from Gemmula speciosa (Splendid gem-turris).